The sequence spans 215 residues: Large ribosomal subunit protein uL3 (215 aa).

Gln-156 is modified (N5-methylglutamine).

It belongs to the universal ribosomal protein uL3 family. Part of the 50S ribosomal subunit. Forms a cluster with proteins L14 and L19. Methylated by PrmB.

Functionally, one of the primary rRNA binding proteins, it binds directly near the 3'-end of the 23S rRNA, where it nucleates assembly of the 50S subunit. The sequence is that of Large ribosomal subunit protein uL3 from Xylella fastidiosa (strain M12).